The chain runs to 152 residues: MPSVRSLLRLLAAAAACGAFAFLGYCIYLNRKRRGDPAFKRRLRDKRRAEPQKAEEQGTQLWDPTKNKKLQELFLQEVRMGELWLSRGEHRMGIQHLGNALLVCEQPRELLKVFKHTLPPKVFEMLLHKIPLICQQFEADMNEQDCLEDDPD.

The Mitochondrial intermembrane segment spans residues 1–9 (MPSVRSLLR). Residues 10 to 29 (LLAAAAACGAFAFLGYCIYL) form a helical membrane-spanning segment. At 30-152 (NRKRRGDPAF…EQDCLEDDPD (123 aa)) the chain is on the cytoplasmic side. A disordered region spans residues 43 to 62 (LRDKRRAEPQKAEEQGTQLW). Basic and acidic residues predominate over residues 47 to 56 (RRAEPQKAEE).

It belongs to the Tom20 family.

The protein localises to the mitochondrion outer membrane. The sequence is that of TOMM20-like protein 1 (TOMM20L) from Homo sapiens (Human).